Here is a 374-residue protein sequence, read N- to C-terminus: MAANDRAAAPGKSGGSAGADGLMRASLSAVAPGTSLRDGLERVLRGNTGGLIVLGSDKTVESMCTGGFVLDVEFTATRLRELCKLDGGIVLSSDLSKILRAGVQLLPDPTIPTEETGTRHRTADRVSKQVGFPVVSVSQSMRLIALYVDGQRRVLEDSAAILSRANQALATLERYKLRLDEVAGTLSALEIEDLVTVRDVSAVAQRLEMVRRIATEIAEYVVELGTDGRLLALQLDELIAGVEPERELVVRDYVPEPTAKRSRTVDEALAELDKLSHAELLELSTVARALGYTGSPETLDSAVSPRGFRLLAKVPRLPGAIIDRLVEHFGGLQKLLAASVDDLQTVDGVGEARARSVREGLSRLAESSILERYV.

A DAC domain is found at 20 to 158 (DGLMRASLSA…DGQRRVLEDS (139 aa)). ATP-binding positions include glycine 87, leucine 105, and 118 to 122 (TRHRT).

Belongs to the DisA family. As to quaternary structure, homooctamer. Interacts with RadA. Requires Mg(2+) as cofactor.

It carries out the reaction 2 ATP = 3',3'-c-di-AMP + 2 diphosphate. Diadenylate cyclase activity is inhibited by the interaction with RadA. Participates in a DNA-damage check-point that is active prior to asymmetric division when DNA is damaged. DisA forms globular foci that rapidly scan along the chromosomes during sporulation, searching for lesions. When a lesion is present, DisA pauses at the lesion site. This triggers a cellular response that culminates in a temporary block in sporulation initiation. Its function is as follows. Also has diadenylate cyclase activity, catalyzing the condensation of 2 ATP molecules into cyclic di-AMP (c-di-AMP). c-di-AMP acts as a signaling molecule that couples DNA integrity with progression of sporulation. The rise in c-di-AMP level generated by DisA while scanning the chromosome, operates as a positive signal that advances sporulation; upon encountering a lesion, the DisA focus arrests at the damaged site and halts c-di-AMP synthesis. The chain is DNA integrity scanning protein DisA from Streptomyces coelicolor (strain ATCC BAA-471 / A3(2) / M145).